A 452-amino-acid polypeptide reads, in one-letter code: Na(+)/H(+) antiporter NhaA (452 aa).

Helical transmembrane passes span M23–I43, L71–I91, L108–V128, G136–G156, V165–F185, H189–G209, L216–H236, I316–G336, V349–V369, L385–L405, and E418–L438.

This sequence belongs to the NhaA Na(+)/H(+) (TC 2.A.33) antiporter family.

It localises to the cell inner membrane. It catalyses the reaction Na(+)(in) + 2 H(+)(out) = Na(+)(out) + 2 H(+)(in). Na(+)/H(+) antiporter that extrudes sodium in exchange for external protons. The protein is Na(+)/H(+) antiporter NhaA of Porphyromonas gingivalis (strain ATCC BAA-308 / W83).